We begin with the raw amino-acid sequence, 1499 residues long: Pleiotropic ABC efflux transporter of multiple drugs CDR1 (1499 aa).

Positions 1–11 are enriched in basic and acidic residues; sequence MSLASDKKDAD. The interval 1 to 29 is disordered; it reads MSLASDKKDADVASTTTTAQDDDNLSTYH. N-linked (GlcNAc...) asparagine glycans are attached at residues Asn-24, Asn-96, and Asn-99. The ABC transporter 1 domain maps to 146 to 399; it reads VYNTVVPSTA…FQKMGYVSPE (254 aa). Ser-307 is modified (phosphoserine). Asn-323 carries N-linked (GlcNAc...) asparagine glycosylation. At Ser-484 the chain carries Phosphoserine. The helical transmembrane segment at 510–530 threads the bilayer; it reads GVTLFMVIGNSSMAFILGSMF. A glycan (N-linked (GlcNAc...) asparagine) is linked at Asn-537. 5 helical membrane-spanning segments follow: residues 548–568, 597–617, 622–642, 654–674, and 763–783; these read AMFFAVLFNAFSSLLEIFSLF, VPAKLITAVCFNIIYYFLVNF, GVFFFYFLINIVAVFAMSHLF, AAMVPASMLLLGLSMYSGFAI, and GFGIGLAYVIFFLVLYLILCE. N-linked (GlcNAc...) asparagine glycosylation is present at Asn-813. In terms of domain architecture, ABC transporter 2 spans 857 to 1099; the sequence is FHWRNLCYDV…TMIDYFESHG (243 aa). 893-900 is a binding site for ATP; sequence GASGAGKT. A glycan (N-linked (GlcNAc...) asparagine) is linked at Asn-1159. Helical transmembrane passes span 1193–1213, 1228–1248, and 1278–1298; these read YLWSKFFLTIFNNIFIGFTFF, AVFMFTVIFNPLLQQYLPSFV, and IPWNILAGTVAFVIYYYAIGF. N-linked (GlcNAc...) asparagine glycosylation occurs at Asn-1301. The next 2 helical transmembrane spans lie at 1314-1334 and 1342-1362; these read LFWLFSCAFYVYIGSLALFCI and AAANMASLMFTLSLSFCGVLV. A glycan (N-linked (GlcNAc...) asparagine) is linked at Asn-1412. Residues 1466-1486 traverse the membrane as a helical segment; it reads WGIFICYIAFNYIAGIFLYWL.

The protein belongs to the ABC transporter superfamily. Phosphorylated at Ser-307 and Ser-484. Ser-307 and Ser-484 are dephosphorylated on glucose depletion and independently rephosphorylated during glucose exposure or under stress.

It is found in the cell membrane. Its activity is regulated as follows. Inhibited by clorgyline. Inhibited by RC21v3, a 4-methoxy-2,3,6-trimethylbenzenesulphonyl derivative of the D-octapeptide D-FFKWQRRR, via the interaction with the ectodomain. FK506, enniatin, milbemycin alpha-11, and milbemycin beta-9 also inhibit CDR1 activity. Inhibited by milbemycin A3/A4 oxim derivatives. Functionally, pleiotropic ABC efflux transporter that transports and confers resistance to structurally and functionally unrelated compounds including rhodamine 6G, Nile red, caspofungin, cycloheximide, or azoles such as fluconazole, itraconazole, ketoconazole, posaconazole, voriconazole, and isavuconazole. Chlorbromuron, itraconazole, yohimbine, ketoconazole, miconazole, clotrimazole, DE-11, tamoxifen, quinidine, verapamil can compete for rhodamine 6G's binding site(s) while compounds such as propanil, chloramphenicol, benomyl, voriconazole, tritylimidazole, ketoconazole, miconazole, tamoxifen, gefitinib shared binding site(s) with fluconazole. Nile red mediated efflux appears to be relatively more specific since only five compounds such as ZW3-12, rhodamine 123, miconazole, clotrimazole, and itraconazole can inhibit its accumulation. Does not use as substrates 4-nitroquinoline 1-oxide (4-NQO) and disulfiram. Does not play a role in the azole resistance in mature biofilms. This chain is Pleiotropic ABC efflux transporter of multiple drugs CDR1, found in Candida glabrata (strain ATCC 2001 / BCRC 20586 / JCM 3761 / NBRC 0622 / NRRL Y-65 / CBS 138) (Yeast).